A 315-amino-acid chain; its full sequence is 4-carboxy-2-hydroxymuconate-6-semialdehyde dehydrogenase (315 aa).

Belongs to the Gfo/Idh/MocA family. As to quaternary structure, homodimer.

It catalyses the reaction 4-carboxy-2-hydroxymuconate semialdehyde hemiacetal + NADP(+) = 2-oxo-2H-pyran-4,6-dicarboxylate + NADPH + H(+). Its pathway is secondary metabolite metabolism; lignin degradation. Inhibited by p-chloromercuribenzoate (10 mM), HgCl2 (10 mM), or 5,5-dithiobis(2-nitrobenzoate) (100 mM). In terms of biological role, involved in the degradation of protocatechuate (PCA) via the PCA 4,5-cleavage pathway. Catalyzes the oxidation of the hemiacetal form of 4-carboxy-2-hydroxymuconate-6-semialdehyde (CHMS) to produce 2-pyrone-4,6-dicarboxylate (PDC). LigC has 10-times-higher affinity to NADP than to NAD. This Sphingobium sp. (strain NBRC 103272 / SYK-6) protein is 4-carboxy-2-hydroxymuconate-6-semialdehyde dehydrogenase (ligC).